We begin with the raw amino-acid sequence, 342 residues long: Ribosomal RNA small subunit methyltransferase C (342 aa).

This sequence belongs to the methyltransferase superfamily. RsmC family. As to quaternary structure, monomer.

It is found in the cytoplasm. The enzyme catalyses guanosine(1207) in 16S rRNA + S-adenosyl-L-methionine = N(2)-methylguanosine(1207) in 16S rRNA + S-adenosyl-L-homocysteine + H(+). Its function is as follows. Specifically methylates the guanine in position 1207 of 16S rRNA in the 30S particle. This is Ribosomal RNA small subunit methyltransferase C from Shewanella oneidensis (strain ATCC 700550 / JCM 31522 / CIP 106686 / LMG 19005 / NCIMB 14063 / MR-1).